Consider the following 350-residue polypeptide: ADP-ribosylhydrolase ARH3 (350 aa).

Residues Glu27, Thr57, Asp58, and Asp59 each coordinate Mg(2+). Asp58 contributes to the substrate binding site. Residues 127-133 (KGSYGNG), His163, Leu216, and Ile252 contribute to the substrate site. Asp295, Asp297, and Thr298 together coordinate Mg(2+).

It belongs to the ADP-ribosylglycohydrolase family. In terms of assembly, monomer. Mg(2+) is required as a cofactor.

It is found in the nucleus. The protein localises to the cytoplasm. The protein resides in the chromosome. Its subcellular location is the mitochondrion matrix. The catalysed reaction is [(1''-&gt;2')-ADP-alpha-D-ribose](n) + H2O = [(1''-&gt;2')-ADP-alpha-D-ribose](n-1) + ADP-D-ribose. The enzyme catalyses 1''-O-acetyl-ADP-alpha-D-ribose + H2O = ADP-D-ribose + acetate + H(+). It catalyses the reaction O-(ADP-D-ribosyl)-L-seryl-[protein] + H2O = ADP-D-ribose + L-seryl-[protein]. It carries out the reaction alpha-NAD(+) + H2O = ADP-D-ribose + nicotinamide + H(+). Its activity is regulated as follows. The protein undergoes a dramatic conformational switch from closed to open states upon substrate-binding, which enables specific substrate recognition for the 1''-O-linkage. The glutamate flap (Glu-27) blocks substrate entrance to Mg(2+) in the unliganded closed state. In presence of substrate, Glu-27 is ejected from the active site: this closed-to-open transition significantly widens the substrate-binding channel and precisely positions the scissile 1''-O-linkage for cleavage while securing tightly 2'- and 3'-hydroxyls of ADP-ribose. Functionally, ADP-ribosylhydrolase that preferentially hydrolyzes the scissile alpha-O-linkage attached to the anomeric C1'' position of ADP-ribose and acts on different substrates, such as proteins ADP-ribosylated on serine and threonine, free poly(ADP-ribose) and O-acetyl-ADP-D-ribose. Specifically acts as a serine mono-ADP-ribosylhydrolase by mediating the removal of mono-ADP-ribose attached to serine residues on proteins, thereby playing a key role in DNA damage response. Serine ADP-ribosylation of proteins constitutes the primary form of ADP-ribosylation of proteins in response to DNA damage. Does not hydrolyze ADP-ribosyl-arginine, -cysteine, -diphthamide, or -asparagine bonds. Also able to degrade protein free poly(ADP-ribose), which is synthesized in response to DNA damage: free poly(ADP-ribose) acts as a potent cell death signal and its degradation by ADPRHL2 protects cells from poly(ADP-ribose)-dependent cell death, a process named parthanatos. Also hydrolyzes free poly(ADP-ribose) in mitochondria. Specifically digests O-acetyl-ADP-D-ribose, a product of deacetylation reactions catalyzed by sirtuins. Specifically degrades 1''-O-acetyl-ADP-D-ribose isomer, rather than 2''-O-acetyl-ADP-D-ribose or 3''-O-acetyl-ADP-D-ribose isomers. The polypeptide is ADP-ribosylhydrolase ARH3 (adprs) (Xenopus tropicalis (Western clawed frog)).